The primary structure comprises 471 residues: MKEYQTITEVSGPLVYVETDEPIGYDEIVEIETPNGDVKRGQVLESSDGFVAIQVFEGTEGVGKDASVRFLGETLKMPVTEDLLGRVLDGSGNPIDGGPDIVPDDRVDIVGEAINPHAREYPEEFIQTGVSGIDGMNTLVRGQKLPIFSGSGLPHSDLALQIARQASVPEEEAETDDDEGSEFAVVFGAMGITAEEANEFMDDFERTGALERSVVFMNLADDPAVERTVTPRMALTTAEYLAFEKDYHVLVILTDMTNYCEALRQIGAAREEVPGRRGYPGYMYTDLAQLYERAGRIEGKEGSVTQIPILTMPGDDDTHPIPDLTGYITEGQIMMNRDLNSQGVTPPVNVLPSLSRLMDDGIGEGLTRADHGDVSDQLYAAYAEGEELRDLVNIVGREALSERDNRYLDFADRFEAEFIDQGFKTNRDIEETLDLGWELLSMFPKTELNRVDEDLIEDHYVEDVADEATAD.

It belongs to the ATPase alpha/beta chains family. Has multiple subunits with at least A(3), B(3), C, D, E, F, H, I and proteolipid K(x).

It localises to the cell membrane. Component of the A-type ATP synthase that produces ATP from ADP in the presence of a proton gradient across the membrane. The B chain is a regulatory subunit. The protein is A-type ATP synthase subunit B of Halobacterium salinarum (strain ATCC 29341 / DSM 671 / R1).